Consider the following 600-residue polypeptide: Glutamine--fructose-6-phosphate aminotransferase [isomerizing] (600 aa).

Residue C2 is the Nucleophile; for GATase activity of the active site. Residues 2 to 217 (CGIVGYIGYQ…DGELVIVTSE (216 aa)) enclose the Glutamine amidotransferase type-2 domain. 2 consecutive SIS domains span residues 283–422 (IINE…AKGF) and 452–590 (IASD…VDKP). The active-site For Fru-6P isomerization activity is the K595.

Homodimer.

Its subcellular location is the cytoplasm. It catalyses the reaction D-fructose 6-phosphate + L-glutamine = D-glucosamine 6-phosphate + L-glutamate. Its function is as follows. Catalyzes the first step in hexosamine metabolism, converting fructose-6P into glucosamine-6P using glutamine as a nitrogen source. This Geobacillus kaustophilus (strain HTA426) protein is Glutamine--fructose-6-phosphate aminotransferase [isomerizing].